The sequence spans 174 residues: Small ribosomal subunit protein uS5 (174 aa).

Positions 19–82 constitute an S5 DRBM domain; that stretch reads LREKMVAINR…DEARRKMVKV (64 aa).

This sequence belongs to the universal ribosomal protein uS5 family. As to quaternary structure, part of the 30S ribosomal subunit. Contacts proteins S4 and S8.

Its function is as follows. With S4 and S12 plays an important role in translational accuracy. Located at the back of the 30S subunit body where it stabilizes the conformation of the head with respect to the body. This is Small ribosomal subunit protein uS5 from Azoarcus sp. (strain BH72).